Reading from the N-terminus, the 144-residue chain is Putative pre-16S rRNA nuclease (144 aa).

Belongs to the YqgF nuclease family.

It is found in the cytoplasm. Its function is as follows. Could be a nuclease involved in processing of the 5'-end of pre-16S rRNA. In Symbiobacterium thermophilum (strain DSM 24528 / JCM 14929 / IAM 14863 / T), this protein is Putative pre-16S rRNA nuclease.